We begin with the raw amino-acid sequence, 329 residues long: GTP 3',8-cyclase (329 aa).

The Radical SAM core domain occupies 1 to 229 (MNQVDYLRIS…EGYVRGNGPA (229 aa)). R8 is a binding site for GTP. C15 and C19 together coordinate [4Fe-4S] cluster. Y21 lines the S-adenosyl-L-methionine pocket. Residue C22 coordinates [4Fe-4S] cluster. R60 is a GTP binding site. S-adenosyl-L-methionine is bound at residue G64. T91 is a binding site for GTP. S115 provides a ligand contact to S-adenosyl-L-methionine. K155 contributes to the GTP binding site. Residue M189 coordinates S-adenosyl-L-methionine. [4Fe-4S] cluster contacts are provided by C252 and C255. Residue 257 to 259 (RVR) participates in GTP binding. C269 provides a ligand contact to [4Fe-4S] cluster.

It belongs to the radical SAM superfamily. MoaA family. Monomer and homodimer. [4Fe-4S] cluster is required as a cofactor.

The enzyme catalyses GTP + AH2 + S-adenosyl-L-methionine = (8S)-3',8-cyclo-7,8-dihydroguanosine 5'-triphosphate + 5'-deoxyadenosine + L-methionine + A + H(+). Its pathway is cofactor biosynthesis; molybdopterin biosynthesis. Catalyzes the cyclization of GTP to (8S)-3',8-cyclo-7,8-dihydroguanosine 5'-triphosphate. The protein is GTP 3',8-cyclase of Cyanothece sp. (strain PCC 7425 / ATCC 29141).